The chain runs to 274 residues: Large ribosomal subunit protein uL2 (274 aa).

Disordered regions lie at residues 37-60 and 224-252; these read QHQK…GHKH and AMNP…WGNL. Positions 50–60 are enriched in basic residues; sequence TTRHKGGGHKH. The span at 229 to 246 shows a compositional bias: basic and acidic residues; the sequence is DHPHGGGEGRTGEGRHAV.

It belongs to the universal ribosomal protein uL2 family. As to quaternary structure, part of the 50S ribosomal subunit. Forms a bridge to the 30S subunit in the 70S ribosome.

In terms of biological role, one of the primary rRNA binding proteins. Required for association of the 30S and 50S subunits to form the 70S ribosome, for tRNA binding and peptide bond formation. It has been suggested to have peptidyltransferase activity; this is somewhat controversial. Makes several contacts with the 16S rRNA in the 70S ribosome. This chain is Large ribosomal subunit protein uL2, found in Paracidovorax citrulli (strain AAC00-1) (Acidovorax citrulli).